The sequence spans 559 residues: Leucine-rich repeat-containing protein 71 (559 aa).

Residues 1–18 (MSSEQSAPGASPRAPRPG) show a composition bias toward low complexity. Positions 1–56 (MSSEQSAPGASPRAPRPGTQKSSGAVTKKGERAAKEKPATVLPPVGEEEPKSPEEY) are disordered. Residues 28 to 38 (KKGERAAKEKP) show a composition bias toward basic and acidic residues. LRR repeat units follow at residues 172 to 193 (NLWK…LPLC), 196 to 216 (TLRK…HKLM), 221 to 241 (TIAH…QLLG), 253 to 266 (TLVS…HIGD), and 281 to 302 (SLLW…KLAE). Composition is skewed to basic and acidic residues over residues 324–348 (KGTQ…REKS) and 380–391 (KSWELAKKEEKL). Residues 324 to 427 (KGTQERSRSP…PEQKPSRAKG (104 aa)) form a disordered region.

The sequence is that of Leucine-rich repeat-containing protein 71 (LRRC71) from Homo sapiens (Human).